Reading from the N-terminus, the 106-residue chain is Large ribosomal subunit protein uL24 (106 aa).

Belongs to the universal ribosomal protein uL24 family. Part of the 50S ribosomal subunit.

In terms of biological role, one of two assembly initiator proteins, it binds directly to the 5'-end of the 23S rRNA, where it nucleates assembly of the 50S subunit. Its function is as follows. One of the proteins that surrounds the polypeptide exit tunnel on the outside of the subunit. This Rhodospirillum rubrum (strain ATCC 11170 / ATH 1.1.1 / DSM 467 / LMG 4362 / NCIMB 8255 / S1) protein is Large ribosomal subunit protein uL24.